Consider the following 383-residue polypeptide: Acetylornithine deacetylase (383 aa).

His-80 contacts Zn(2+). Asp-82 is a catalytic residue. Asp-112 contacts Zn(2+). Glu-144 is an active-site residue. 3 residues coordinate Zn(2+): Glu-145, Glu-169, and His-355.

Belongs to the peptidase M20A family. ArgE subfamily. As to quaternary structure, homodimer. Requires Zn(2+) as cofactor. Co(2+) is required as a cofactor. It depends on glutathione as a cofactor.

It localises to the cytoplasm. The catalysed reaction is N(2)-acetyl-L-ornithine + H2O = L-ornithine + acetate. It functions in the pathway amino-acid biosynthesis; L-arginine biosynthesis; L-ornithine from N(2)-acetyl-L-ornithine (linear): step 1/1. In terms of biological role, catalyzes the hydrolysis of the amide bond of N(2)-acetylated L-amino acids. Cleaves the acetyl group from N-acetyl-L-ornithine to form L-ornithine, an intermediate in L-arginine biosynthesis pathway, and a branchpoint in the synthesis of polyamines. The sequence is that of Acetylornithine deacetylase from Shigella boydii serotype 4 (strain Sb227).